Reading from the N-terminus, the 339-residue chain is Anthranilate phosphoribosyltransferase (339 aa).

5-phospho-alpha-D-ribose 1-diphosphate is bound by residues G81, 84 to 85 (GD), S89, 91 to 94 (NVSS), 109 to 117 (KHGNRALSS), and A121. Residue G81 participates in anthranilate binding. S93 contacts Mg(2+). Anthranilate is bound at residue N112. R167 serves as a coordination point for anthranilate. Mg(2+) is bound by residues D225 and E226.

The protein belongs to the anthranilate phosphoribosyltransferase family. In terms of assembly, homodimer. Requires Mg(2+) as cofactor.

It carries out the reaction N-(5-phospho-beta-D-ribosyl)anthranilate + diphosphate = 5-phospho-alpha-D-ribose 1-diphosphate + anthranilate. It participates in amino-acid biosynthesis; L-tryptophan biosynthesis; L-tryptophan from chorismate: step 2/5. Its function is as follows. Catalyzes the transfer of the phosphoribosyl group of 5-phosphorylribose-1-pyrophosphate (PRPP) to anthranilate to yield N-(5'-phosphoribosyl)-anthranilate (PRA). The sequence is that of Anthranilate phosphoribosyltransferase from Brucella canis (strain ATCC 23365 / NCTC 10854 / RM-666).